Consider the following 579-residue polypeptide: Rhoptry surface protein CERLI2 (579 aa).

The C2 domain occupies Leu-52 to Lys-84. Repeat copies occupy residues Gln-442 to Ile-451, Gln-452 to Ile-461, Gln-462 to Ile-471, Gln-472 to Ile-481, Gln-482 to Ile-491, Gln-492 to Ile-501, Gln-502 to Ile-511, Gln-522 to Ile-531, Gln-532 to Ile-541, Gln-542 to Ile-551, and Gln-552 to Asn-561. Residues Gln-442–Asn-561 are 12 X 10 AA tandem repeat of Q-T-E-I-[K/N]-N-D-[H/N/I][I/N].

The protein resides in the cytoplasmic vesicle. The protein localises to the secretory vesicle. It is found in the rhoptry membrane. Its subcellular location is the cell membrane. It localises to the host cell membrane. Functionally, plays an important role in rhoptry physiology and thus is essential for merozoite invasion of host erythrocytes. The protein is Rhoptry surface protein CERLI2 of Plasmodium falciparum (isolate 3D7).